The sequence spans 277 residues: Urease accessory protein UreD (277 aa).

This sequence belongs to the UreD family. UreD, UreF and UreG form a complex that acts as a GTP-hydrolysis-dependent molecular chaperone, activating the urease apoprotein by helping to assemble the nickel containing metallocenter of UreC. The UreE protein probably delivers the nickel.

Its subcellular location is the cytoplasm. Functionally, required for maturation of urease via the functional incorporation of the urease nickel metallocenter. This is Urease accessory protein UreD from Pseudomonas putida (strain GB-1).